The sequence spans 269 residues: Ribonuclease HII (269 aa).

The region spanning 83–269 (YLIAGVDEVG…HRMSFLTNIL (187 aa)) is the RNase H type-2 domain. A divalent metal cation-binding residues include aspartate 89, glutamate 90, and aspartate 185.

It belongs to the RNase HII family. Mn(2+) is required as a cofactor. Mg(2+) serves as cofactor.

It localises to the cytoplasm. It carries out the reaction Endonucleolytic cleavage to 5'-phosphomonoester.. In terms of biological role, endonuclease that specifically degrades the RNA of RNA-DNA hybrids. In Clostridium botulinum (strain Hall / ATCC 3502 / NCTC 13319 / Type A), this protein is Ribonuclease HII.